A 3083-amino-acid polypeptide reads, in one-letter code: Genome polyprotein (3083 aa).

A Peptidase S30 domain is found at 173–313 (IVCVDDVNNL…VLFYSDVEHY (141 aa)). Residue Ser267 is the For P1 proteinase activity of the active site. Residues 365–368 (KLSC) carry the Involved in interaction with stylet and aphid transmission motif. Positions 621–623 (PTK) match the Involved in virions binding and aphid transmission motif. Residues 647 to 769 (MYIAKEGYCY…QSEMKHYRVG (123 aa)) form the Peptidase C6 domain. Residues Cys655 and His728 each act as for helper component proteinase activity in the active site. A Helicase ATP-binding domain is found at 1239–1391 (EIASSSEGEF…TQFAVKVKTE (153 aa)). Residue 1252 to 1259 (GAVGSGKS) coordinates ATP. The DECH box motif lies at 1341 to 1344 (DECH). The Helicase C-terminal domain maps to 1410–1569 (DMVQHGNNIL…GLSVTTHGVS (160 aa)). The short motif at 1894 to 1903 (KRGKVKGNNS) is the Nuclear localization signal element. Tyr1918 carries the O-(5'-phospho-RNA)-tyrosine modification. Positions 2045–2263 (SKSIYKGVRD…IAWGSLNLVD (219 aa)) constitute a Peptidase C4 domain. Residues His2090, Asp2125, and Cys2195 each act as for nuclear inclusion protein A activity in the active site. The RdRp catalytic domain maps to 2529 to 2653 (WLYCHADGSQ…AVKDEDSGLL (125 aa)). The tract at residues 2808-2855 (QTREAGAGASKKDKDEDKDKKKDVASSSASEKAVATATKDKDVNAGSH) is disordered. Residues 2817-2831 (SKKDKDEDKDKKKDV) are compositionally biased toward basic and acidic residues. A compositionally biased stretch (low complexity) spans 2832–2844 (ASSSASEKAVATA). At Thr3065 the chain carries Phosphothreonine.

The protein belongs to the potyviridae genome polyprotein family. In terms of assembly, interacts with host eIF4E protein (via cap-binding region); this interaction mediates the translation of the VPg-viral RNA conjugates. Part of a complex that comprises VPg, RNA, host EIF4E and EIF4G; this interaction mediates the translation of the VPg-viral RNA conjugates. Post-translationally, VPg is uridylylated by the polymerase and is covalently attached to the 5'-end of the genomic RNA. This uridylylated form acts as a nucleotide-peptide primer for the polymerase. In terms of processing, potyviral RNA is expressed as two polyproteins which undergo post-translational proteolytic processing. Genome polyprotein is processed by NIa-pro, P1 and HC-pro proteinases resulting in the production of at least ten individual proteins. P3N-PIPO polyprotein is cleaved by P1 and HC-pro proteinases resulting in the production of three individual proteins. The P1 proteinase and the HC-pro cleave only their respective C-termini autocatalytically. 6K1 is essential for proper proteolytic separation of P3 from CI.

The protein resides in the host cytoplasmic vesicle. Its subcellular location is the host nucleus. It is found in the virion. The enzyme catalyses RNA(n) + a ribonucleoside 5'-triphosphate = RNA(n+1) + diphosphate. It catalyses the reaction Hydrolyzes glutaminyl bonds, and activity is further restricted by preferences for the amino acids in P6 - P1' that vary with the species of potyvirus, e.g. Glu-Xaa-Xaa-Tyr-Xaa-Gln-|-(Ser or Gly) for the enzyme from tobacco etch virus. The natural substrate is the viral polyprotein, but other proteins and oligopeptides containing the appropriate consensus sequence are also cleaved.. The catalysed reaction is Hydrolyzes a Gly-|-Gly bond at its own C-terminus, commonly in the sequence -Tyr-Xaa-Val-Gly-|-Gly, in the processing of the potyviral polyprotein.. Functionally, required for aphid transmission and also has proteolytic activity. Only cleaves a Gly-Gly dipeptide at its own C-terminus. Interacts with virions and aphid stylets. Acts as a suppressor of RNA-mediated gene silencing, also known as post-transcriptional gene silencing (PTGS), a mechanism of plant viral defense that limits the accumulation of viral RNAs. May have RNA-binding activity. Has helicase activity. It may be involved in replication. Its function is as follows. Indispensable for virus replication. Reduces the abundance of host transcripts related to jasmonic acid biosynthesis therefore altering the host defenses. In order to increase its own stability, decreases host protein degradation pathways. In terms of biological role, indispensable for virus replication. Functionally, mediates the cap-independent, EIF4E-dependent translation of viral genomic RNAs. Binds to the cap-binding site of host EIF4E and thus interferes with the host EIF4E-dependent mRNA export and translation. VPg-RNA directly binds EIF4E and is a template for transcription. Also forms trimeric complexes with EIF4E-EIF4G, which are templates for translation. Has RNA-binding and proteolytic activities. Its function is as follows. An RNA-dependent RNA polymerase that plays an essential role in the virus replication. In terms of biological role, involved in aphid transmission, cell-to-cell and systemis movement, encapsidation of the viral RNA and in the regulation of viral RNA amplification. The polypeptide is Genome polyprotein (Zucchini yellow mosaic virus (strain Singapore) (ZYMV)).